A 489-amino-acid polypeptide reads, in one-letter code: Protein nucleotidyltransferase YdiU (489 aa).

Gly88, Gly90, Arg91, Lys111, Asp123, Gly124, Arg174, and Arg181 together coordinate ATP. Asp250 functions as the Proton acceptor in the catalytic mechanism. Asn251 and Asp260 together coordinate Mg(2+). An ATP-binding site is contributed by Asp260.

This sequence belongs to the SELO family. It depends on Mg(2+) as a cofactor. Mn(2+) serves as cofactor.

The enzyme catalyses L-seryl-[protein] + ATP = 3-O-(5'-adenylyl)-L-seryl-[protein] + diphosphate. It carries out the reaction L-threonyl-[protein] + ATP = 3-O-(5'-adenylyl)-L-threonyl-[protein] + diphosphate. It catalyses the reaction L-tyrosyl-[protein] + ATP = O-(5'-adenylyl)-L-tyrosyl-[protein] + diphosphate. The catalysed reaction is L-histidyl-[protein] + UTP = N(tele)-(5'-uridylyl)-L-histidyl-[protein] + diphosphate. The enzyme catalyses L-seryl-[protein] + UTP = O-(5'-uridylyl)-L-seryl-[protein] + diphosphate. It carries out the reaction L-tyrosyl-[protein] + UTP = O-(5'-uridylyl)-L-tyrosyl-[protein] + diphosphate. Its function is as follows. Nucleotidyltransferase involved in the post-translational modification of proteins. It can catalyze the addition of adenosine monophosphate (AMP) or uridine monophosphate (UMP) to a protein, resulting in modifications known as AMPylation and UMPylation. The sequence is that of Protein nucleotidyltransferase YdiU from Vibrio parahaemolyticus serotype O3:K6 (strain RIMD 2210633).